The primary structure comprises 36 residues: Photosystem II reaction center protein M (36 aa).

The helical transmembrane segment at 7-27 (GFVASLMFVLVPTVFLIVLFI) threads the bilayer.

It belongs to the PsbM family. In terms of assembly, PSII is composed of 1 copy each of membrane proteins PsbA, PsbB, PsbC, PsbD, PsbE, PsbF, PsbH, PsbI, PsbJ, PsbK, PsbL, PsbM, PsbT, PsbX, PsbY, PsbZ, Psb30/Ycf12, peripheral proteins PsbO, CyanoQ (PsbQ), PsbU, PsbV and a large number of cofactors. It forms dimeric complexes.

The protein resides in the cellular thylakoid membrane. Its function is as follows. One of the components of the core complex of photosystem II (PSII). PSII is a light-driven water:plastoquinone oxidoreductase that uses light energy to abstract electrons from H(2)O, generating O(2) and a proton gradient subsequently used for ATP formation. It consists of a core antenna complex that captures photons, and an electron transfer chain that converts photonic excitation into a charge separation. This subunit is found at the monomer-monomer interface. In Synechococcus sp. (strain CC9311), this protein is Photosystem II reaction center protein M.